Reading from the N-terminus, the 431-residue chain is Adenylosuccinate lyase (431 aa).

N(6)-(1,2-dicarboxyethyl)-AMP is bound by residues 4–5 (RY), 67–69 (RHD), and 93–94 (TS). The active-site Proton donor/acceptor is the H141. Q212 is a binding site for N(6)-(1,2-dicarboxyethyl)-AMP. S262 serves as the catalytic Proton donor/acceptor. Residues S263, 268-270 (KRN), N276, and 307-311 (SAERI) contribute to the N(6)-(1,2-dicarboxyethyl)-AMP site.

Belongs to the lyase 1 family. Adenylosuccinate lyase subfamily. Homodimer and homotetramer. Residues from neighboring subunits contribute catalytic and substrate-binding residues to each active site.

The catalysed reaction is N(6)-(1,2-dicarboxyethyl)-AMP = fumarate + AMP. It carries out the reaction (2S)-2-[5-amino-1-(5-phospho-beta-D-ribosyl)imidazole-4-carboxamido]succinate = 5-amino-1-(5-phospho-beta-D-ribosyl)imidazole-4-carboxamide + fumarate. It participates in purine metabolism; AMP biosynthesis via de novo pathway; AMP from IMP: step 2/2. Its pathway is purine metabolism; IMP biosynthesis via de novo pathway; 5-amino-1-(5-phospho-D-ribosyl)imidazole-4-carboxamide from 5-amino-1-(5-phospho-D-ribosyl)imidazole-4-carboxylate: step 2/2. Its function is as follows. Catalyzes two reactions in de novo purine nucleotide biosynthesis. Catalyzes the breakdown of 5-aminoimidazole- (N-succinylocarboxamide) ribotide (SAICAR or 2-[5-amino-1-(5-phospho-beta-D-ribosyl)imidazole-4-carboxamido]succinate) to 5-aminoimidazole-4-carboxamide ribotide (AICAR or 5-amino-1-(5-phospho-beta-D-ribosyl)imidazole-4-carboxamide) and fumarate, and of adenylosuccinate (ADS or N(6)-(1,2-dicarboxyethyl)-AMP) to adenosine monophosphate (AMP) and fumarate. This chain is Adenylosuccinate lyase (purB), found in Staphylococcus epidermidis (strain ATCC 35984 / DSM 28319 / BCRC 17069 / CCUG 31568 / BM 3577 / RP62A).